The chain runs to 270 residues: Putative phosphoenolpyruvate synthase regulatory protein (270 aa).

151–158 (GVSRCGKT) lines the ADP pocket.

The protein belongs to the pyruvate, phosphate/water dikinase regulatory protein family. PSRP subfamily.

The catalysed reaction is [pyruvate, water dikinase] + ADP = [pyruvate, water dikinase]-phosphate + AMP + H(+). It carries out the reaction [pyruvate, water dikinase]-phosphate + phosphate + H(+) = [pyruvate, water dikinase] + diphosphate. In terms of biological role, bifunctional serine/threonine kinase and phosphorylase involved in the regulation of the phosphoenolpyruvate synthase (PEPS) by catalyzing its phosphorylation/dephosphorylation. The sequence is that of Putative phosphoenolpyruvate synthase regulatory protein from Methylobacillus flagellatus (strain ATCC 51484 / DSM 6875 / VKM B-1610 / KT).